The following is a 116-amino-acid chain: Cocaine- and amphetamine-regulated transcript protein (116 aa).

The signal sequence occupies residues 1 to 27; sequence MESSRVRLLPLLGAALLLMLPLLGTRA. At Y41 the chain carries Phosphotyrosine. Phosphoserine is present on S48. Intrachain disulfides connect C82/C100, C88/C108, and C102/C115.

It belongs to the CART family. As to expression, hypothalamus. Found in neurons of the ventrolateral part of the arcuate nucleus, in the external zone of the median eminence, and also found in terminals in the periventricular part of the paraventricular nucleus.

It is found in the secreted. Functionally, satiety factor closely associated with the actions of leptin and neuropeptide Y; this anorectic peptide inhibits both normal and starvation-induced feeding and completely blocks the feeding response induced by neuropeptide Y and regulated by leptin in the hypothalamus. It promotes neuronal development and survival in vitro. The protein is Cocaine- and amphetamine-regulated transcript protein (CARTPT) of Homo sapiens (Human).